Consider the following 202-residue polypeptide: Large ribosomal subunit protein bL25 (202 aa).

It belongs to the bacterial ribosomal protein bL25 family. CTC subfamily. As to quaternary structure, part of the 50S ribosomal subunit; part of the 5S rRNA/L5/L18/L25 subcomplex. Contacts the 5S rRNA. Binds to the 5S rRNA independently of L5 and L18.

This is one of the proteins that binds to the 5S RNA in the ribosome where it forms part of the central protuberance. This Rickettsia bellii (strain OSU 85-389) protein is Large ribosomal subunit protein bL25.